An 811-amino-acid polypeptide reads, in one-letter code: Protein kinase C-binding protein NELL2a (811 aa).

The signal sequence occupies residues methionine 1–alanine 18. Positions alanine 54–cysteine 225 constitute a Laminin G-like domain. Residues asparagine 222, asparagine 290, and asparagine 295 are each glycosylated (N-linked (GlcNAc...) asparagine). The VWFC 1 domain occupies arginine 269–glutamine 328. The 43-residue stretch at glycine 395–glutamate 437 folds into the EGF-like 1 domain. 3 disulfides stabilise this stretch: cysteine 399–cysteine 411, cysteine 405–cysteine 420, and cysteine 422–cysteine 436. Residues aspartate 438, isoleucine 439, and glutamate 441 each coordinate Ca(2+). An EGF-like 2; calcium-binding domain is found at aspartate 438–threonine 479. Disulfide bonds link cysteine 442/cysteine 455, cysteine 449/cysteine 464, cysteine 466/cysteine 478, cysteine 484/cysteine 497, cysteine 491/cysteine 506, cysteine 508/cysteine 519, cysteine 523/cysteine 533, cysteine 527/cysteine 539, and cysteine 541/cysteine 550. 3 residues coordinate Ca(2+): asparagine 457, threonine 458, and serine 461. One can recognise an EGF-like 3; calcium-binding domain in the interval glutamate 480–arginine 520. Asparagine 515 carries N-linked (GlcNAc...) asparagine glycosylation. An EGF-like 4 domain is found at alanine 521–glutamate 551. Residues aspartate 553, isoleucine 554, and glutamate 556 each contribute to the Ca(2+) site. The 40-residue stretch at aspartate 553–serine 592 folds into the EGF-like 5; calcium-binding domain. Cystine bridges form between cysteine 557/cysteine 570, cysteine 564/cysteine 579, and cysteine 581/cysteine 598. Asparagine 572, leucine 573, and tryptophan 576 together coordinate Ca(2+). 3 residues coordinate Ca(2+): aspartate 600, isoleucine 601, and glutamate 603. Residues aspartate 600–serine 635 form the EGF-like 6; calcium-binding domain. Cystine bridges form between cysteine 604–cysteine 617, cysteine 611–cysteine 626, and cysteine 628–cysteine 634. Asparagine 613 carries N-linked (GlcNAc...) asparagine glycosylation. The Ca(2+) site is built by asparagine 619, leucine 620, and glycine 623. An N-linked (GlcNAc...) asparagine glycan is attached at asparagine 633. VWFC domains follow at residues glycine 636–aspartate 691 and serine 696–valine 754.

As to quaternary structure, homotrimer.

It localises to the secreted. May regulate neuronal differentiation, polarization and axon guidance. This chain is Protein kinase C-binding protein NELL2a (nell2a), found in Danio rerio (Zebrafish).